The following is a 187-amino-acid chain: UPF0301 protein Sala_0165 (187 aa).

The protein belongs to the UPF0301 (AlgH) family.

The polypeptide is UPF0301 protein Sala_0165 (Sphingopyxis alaskensis (strain DSM 13593 / LMG 18877 / RB2256) (Sphingomonas alaskensis)).